A 222-amino-acid chain; its full sequence is Adapter protein MecA (222 aa).

The protein belongs to the MecA family. In terms of assembly, homodimer.

Its function is as follows. Enables the recognition and targeting of unfolded and aggregated proteins to the ClpC protease or to other proteins involved in proteolysis. The polypeptide is Adapter protein MecA (Lysinibacillus sphaericus (strain C3-41)).